Reading from the N-terminus, the 170-residue chain is Pollen-specific protein C13 (170 aa).

The N-terminal stretch at 1–27 is a signal peptide; that stretch reads MASVPAPATTTAAVILCLCVVLSCAAA. 3 disulfides stabilise this stretch: Cys-43/Cys-114, Cys-46/Cys-155, and Cys-67/Cys-102. The N-linked (GlcNAc...) asparagine glycan is linked to Asn-53.

Belongs to the Ole e I family. Pollen.

In Zea mays (Maize), this protein is Pollen-specific protein C13 (MGS1).